Reading from the N-terminus, the 311-residue chain is Malate dehydrogenase (311 aa).

Residues 7–13 (GAAGGIG) and aspartate 34 each bind NAD(+). 2 residues coordinate substrate: arginine 81 and arginine 87. NAD(+) contacts are provided by residues asparagine 94 and 117-119 (ITN). Substrate contacts are provided by asparagine 119 and arginine 153. Histidine 177 acts as the Proton acceptor in catalysis. Methionine 227 is an NAD(+) binding site.

The protein belongs to the LDH/MDH superfamily. MDH type 1 family. In terms of assembly, homodimer.

It carries out the reaction (S)-malate + NAD(+) = oxaloacetate + NADH + H(+). Catalyzes the reversible oxidation of malate to oxaloacetate. This Aliivibrio fischeri (strain MJ11) (Vibrio fischeri) protein is Malate dehydrogenase.